The following is a 325-amino-acid chain: Elongation factor P--(R)-beta-lysine ligase (325 aa).

76 to 78 is a substrate binding site; it reads SPE. ATP contacts are provided by residues 100–102 and Asn-109; that span reads RNE. Substrate is bound at residue Tyr-118. ATP is bound at residue 244–245; that stretch reads EL. Glu-251 serves as a coordination point for substrate. An ATP-binding site is contributed by Gly-300.

Belongs to the class-II aminoacyl-tRNA synthetase family. EpmA subfamily. Homodimer.

It catalyses the reaction D-beta-lysine + L-lysyl-[protein] + ATP = N(6)-((3R)-3,6-diaminohexanoyl)-L-lysyl-[protein] + AMP + diphosphate + H(+). In terms of biological role, with EpmB is involved in the beta-lysylation step of the post-translational modification of translation elongation factor P (EF-P). Catalyzes the ATP-dependent activation of (R)-beta-lysine produced by EpmB, forming a lysyl-adenylate, from which the beta-lysyl moiety is then transferred to the epsilon-amino group of a conserved specific lysine residue in EF-P. The sequence is that of Elongation factor P--(R)-beta-lysine ligase from Pectobacterium atrosepticum (strain SCRI 1043 / ATCC BAA-672) (Erwinia carotovora subsp. atroseptica).